The following is a 504-amino-acid chain: Prenylcysteine oxidase 1 (504 aa).

Positions 1–28 are cleaved as a signal peptide; sequence MGRFAATLVGSLFGLGLLLCGLGRLASA. 3 N-linked (GlcNAc...) asparagine glycosylation sites follow: Asn196, Asn322, and Asn352.

The protein belongs to the prenylcysteine oxidase family. The cofactor is FAD. As to expression, expressed mainly in cerebrum.

It localises to the lysosome. It catalyses the reaction an S-polyprenyl-L-cysteine + O2 + H2O = a polyprenal + L-cysteine + H2O2. It carries out the reaction S-(2E,6E)-farnesyl-L-cysteine + O2 + H2O = (2E,6E)-farnesal + L-cysteine + H2O2. The enzyme catalyses [(2E,6E,10E)-geranylgeranyl]-L-cysteine + O2 + H2O = (2E,6E,10E)-geranylgeranial + L-cysteine + H2O2. Prenylcysteine oxidase that cleaves the thioether bond of prenyl-L-cysteines, such as farnesylcysteine and geranylgeranylcysteine. Only active against free prenylcysteines and not prenylcysteine residues within prenylated proteins or peptides. Involved in the final step in the degradation of prenylated proteins, by degrading prenylcysteines after the protein has been degraded. The protein is Prenylcysteine oxidase 1 of Rattus norvegicus (Rat).